A 268-amino-acid chain; its full sequence is Undecaprenyl-diphosphatase (268 aa).

7 consecutive transmembrane segments (helical) span residues 47-67, 83-103, 109-129, 144-164, 184-204, 218-238, and 246-266; these read FTVL…FAKL, FVIG…IAGK, LFNP…LMWV, FPLP…IPGV, AAEF…AYDF, TVAI…KAFL, and FTFF…ALAL.

Belongs to the UppP family.

It localises to the cell inner membrane. The catalysed reaction is di-trans,octa-cis-undecaprenyl diphosphate + H2O = di-trans,octa-cis-undecaprenyl phosphate + phosphate + H(+). Its function is as follows. Catalyzes the dephosphorylation of undecaprenyl diphosphate (UPP). Confers resistance to bacitracin. The polypeptide is Undecaprenyl-diphosphatase (Nitrobacter winogradskyi (strain ATCC 25391 / DSM 10237 / CIP 104748 / NCIMB 11846 / Nb-255)).